The following is a 126-amino-acid chain: Fluoride-specific ion channel FluC (126 aa).

4 helical membrane-spanning segments follow: residues 5-25 (FILA…LVGI), 39-59 (TLFI…LFAV), 69-89 (IFLV…SLDT), and 103-123 (AYMI…IQIV). Gly-77 and Thr-80 together coordinate Na(+).

The protein belongs to the fluoride channel Fluc/FEX (TC 1.A.43) family.

The protein resides in the cell inner membrane. The enzyme catalyses fluoride(in) = fluoride(out). With respect to regulation, na(+) is not transported, but it plays an essential structural role and its presence is essential for fluoride channel function. Fluoride-specific ion channel. Important for reducing fluoride concentration in the cell, thus reducing its toxicity. This chain is Fluoride-specific ion channel FluC, found in Nitrobacter winogradskyi (strain ATCC 25391 / DSM 10237 / CIP 104748 / NCIMB 11846 / Nb-255).